Consider the following 97-residue polypeptide: Small ribosomal subunit protein uS19 (97 aa).

Belongs to the universal ribosomal protein uS19 family.

In terms of biological role, protein S19 forms a complex with S13 that binds strongly to the 16S ribosomal RNA. In Salinibacter ruber (strain DSM 13855 / M31), this protein is Small ribosomal subunit protein uS19.